A 259-amino-acid chain; its full sequence is 3-deoxy-manno-octulosonate cytidylyltransferase (259 aa).

This sequence belongs to the KdsB family.

Its subcellular location is the cytoplasm. The enzyme catalyses 3-deoxy-alpha-D-manno-oct-2-ulosonate + CTP = CMP-3-deoxy-beta-D-manno-octulosonate + diphosphate. Its pathway is nucleotide-sugar biosynthesis; CMP-3-deoxy-D-manno-octulosonate biosynthesis; CMP-3-deoxy-D-manno-octulosonate from 3-deoxy-D-manno-octulosonate and CTP: step 1/1. It functions in the pathway bacterial outer membrane biogenesis; lipopolysaccharide biosynthesis. In terms of biological role, activates KDO (a required 8-carbon sugar) for incorporation into bacterial lipopolysaccharide in Gram-negative bacteria. This Alkalilimnicola ehrlichii (strain ATCC BAA-1101 / DSM 17681 / MLHE-1) protein is 3-deoxy-manno-octulosonate cytidylyltransferase.